The chain runs to 306 residues: tRNA-cytidine(32) 2-sulfurtransferase (306 aa).

The short motif at 44 to 49 is the PP-loop motif element; sequence SGGKDS. [4Fe-4S] cluster is bound by residues C119, C122, and C210.

The protein belongs to the TtcA family. In terms of assembly, homodimer. Mg(2+) serves as cofactor. It depends on [4Fe-4S] cluster as a cofactor.

The protein localises to the cytoplasm. The catalysed reaction is cytidine(32) in tRNA + S-sulfanyl-L-cysteinyl-[cysteine desulfurase] + AH2 + ATP = 2-thiocytidine(32) in tRNA + L-cysteinyl-[cysteine desulfurase] + A + AMP + diphosphate + H(+). The protein operates within tRNA modification. Catalyzes the ATP-dependent 2-thiolation of cytidine in position 32 of tRNA, to form 2-thiocytidine (s(2)C32). The sulfur atoms are provided by the cysteine/cysteine desulfurase (IscS) system. This Photorhabdus laumondii subsp. laumondii (strain DSM 15139 / CIP 105565 / TT01) (Photorhabdus luminescens subsp. laumondii) protein is tRNA-cytidine(32) 2-sulfurtransferase.